The sequence spans 144 residues: FK506-binding protein 2 (144 aa).

The first 20 residues, 1 to 20 (MARIIVLIVAFMALIAGVFA), serve as a signal peptide directing secretion. Positions 48 to 136 (GDTVSVHYTG…IFTTELVSID (89 aa)) constitute a PPIase FKBP-type domain. Positions 141 to 144 (RDEL) match the Prevents secretion from ER motif.

It belongs to the FKBP-type PPIase family. FKBP2 subfamily.

Its subcellular location is the endoplasmic reticulum. The catalysed reaction is [protein]-peptidylproline (omega=180) = [protein]-peptidylproline (omega=0). Its activity is regulated as follows. Inhibited by both FK506 and rapamycin. In terms of biological role, PPIases accelerate the folding of proteins. It catalyzes the cis-trans isomerization of proline imidic peptide bonds in oligopeptides. This chain is FK506-binding protein 2 (FPR2), found in Yarrowia lipolytica (strain CLIB 122 / E 150) (Yeast).